We begin with the raw amino-acid sequence, 295 residues long: Glycine N-acyltransferase-like protein Keg1 (295 aa).

The residue at position 41 (Lys-41) is an N6-acetyllysine; alternate. At Lys-41 the chain carries N6-succinyllysine; alternate. Position 43 is an N6-acetyllysine (Lys-43). The residue at position 48 (Lys-48) is an N6-acetyllysine; alternate. Position 48 is an N6-succinyllysine; alternate (Lys-48). N6-acetyllysine is present on residues Lys-80 and Lys-83. N6-acetyllysine; alternate is present on residues Lys-124, Lys-128, and Lys-140. N6-succinyllysine; alternate is present on residues Lys-124, Lys-128, and Lys-140. Lys-150 is subject to N6-acetyllysine. N6-acetyllysine; alternate is present on Lys-255. Lys-255 bears the N6-succinyllysine; alternate mark.

This sequence belongs to the glycine N-acyltransferase family. In terms of assembly, binds to microtubules.

The protein localises to the cytoplasm. It localises to the cytoskeleton. The protein resides in the microtubule organizing center. Its subcellular location is the centrosome. It catalyses the reaction an acyl-CoA + glycine = an N-acylglycine + CoA + H(+). In terms of biological role, acyltransferase which transfers the acyl group to the N-terminus of glycine. Can conjugate a multitude of substrates to form a variety of N-acylglycines. The sequence is that of Glycine N-acyltransferase-like protein Keg1 (Keg1) from Mus musculus (Mouse).